Consider the following 395-residue polypeptide: Elongation factor Tu (395 aa).

The tr-type G domain occupies 10 to 204 (KPHVNIGTIG…TVDSYIPEPA (195 aa)). The interval 19–26 (GHVDHGKT) is G1. Position 19 to 26 (19 to 26 (GHVDHGKT)) interacts with GTP. Thr26 contributes to the Mg(2+) binding site. The segment at 60–64 (GITIN) is G2. Residues 81–84 (DAPG) are G3. GTP is bound by residues 81 to 85 (DAPGH) and 136 to 139 (NKTD). The interval 136–139 (NKTD) is G4. Residues 174–176 (SAL) are G5.

This sequence belongs to the TRAFAC class translation factor GTPase superfamily. Classic translation factor GTPase family. EF-Tu/EF-1A subfamily. Monomer.

Its subcellular location is the cytoplasm. It catalyses the reaction GTP + H2O = GDP + phosphate + H(+). Functionally, GTP hydrolase that promotes the GTP-dependent binding of aminoacyl-tRNA to the A-site of ribosomes during protein biosynthesis. The chain is Elongation factor Tu from Leuconostoc mesenteroides subsp. mesenteroides (strain ATCC 8293 / DSM 20343 / BCRC 11652 / CCM 1803 / JCM 6124 / NCDO 523 / NBRC 100496 / NCIMB 8023 / NCTC 12954 / NRRL B-1118 / 37Y).